The primary structure comprises 190 residues: Holliday junction branch migration complex subunit RuvA (190 aa).

Positions 1-64 are domain I; sequence MIGKLTGTLL…EDAQLLYGFG (64 aa). Positions 65–143 are domain II; sequence THSERQAFRE…ADTGAQSLFV (79 aa). A flexible linker region spans residues 144–148; it reads NNDQN. Residues 148-190 are domain III; it reads NDIVQALMALGYSDKDAAAALKKLPPDVGVTEGIKLALKALAK.

The protein belongs to the RuvA family. Homotetramer. Forms an RuvA(8)-RuvB(12)-Holliday junction (HJ) complex. HJ DNA is sandwiched between 2 RuvA tetramers; dsDNA enters through RuvA and exits via RuvB. An RuvB hexamer assembles on each DNA strand where it exits the tetramer. Each RuvB hexamer is contacted by two RuvA subunits (via domain III) on 2 adjacent RuvB subunits; this complex drives branch migration. In the full resolvosome a probable DNA-RuvA(4)-RuvB(12)-RuvC(2) complex forms which resolves the HJ.

The protein resides in the cytoplasm. Functionally, the RuvA-RuvB-RuvC complex processes Holliday junction (HJ) DNA during genetic recombination and DNA repair, while the RuvA-RuvB complex plays an important role in the rescue of blocked DNA replication forks via replication fork reversal (RFR). RuvA specifically binds to HJ cruciform DNA, conferring on it an open structure. The RuvB hexamer acts as an ATP-dependent pump, pulling dsDNA into and through the RuvAB complex. HJ branch migration allows RuvC to scan DNA until it finds its consensus sequence, where it cleaves and resolves the cruciform DNA. The protein is Holliday junction branch migration complex subunit RuvA of Delftia acidovorans (strain DSM 14801 / SPH-1).